Here is a 250-residue protein sequence, read N- to C-terminus: UPF0193 protein EVG1 homolog (250 aa).

The tract at residues 86-110 (ESLRNGEPLPLPEPPRPNTNNDPDK) is disordered.

This sequence belongs to the UPF0193 (EVG1) family.

The protein is UPF0193 protein EVG1 homolog of Drosophila melanogaster (Fruit fly).